The chain runs to 371 residues: Cytochrome b (371 aa).

Transmembrane regions (helical) follow at residues 25–45 (FGSM…FLSM), 69–90 (WMMQ…YMHI), 105–125 (WLSG…GYVL), and 170–190 (FFAL…VHIM). Heme b contacts are provided by H75 and H89. Residues H174 and H188 each contribute to the heme b site. Position 193 (H193) interacts with a ubiquinone. 4 helical membrane-spanning segments follow: residues 218–238 (YKDL…VSFF), 280–300 (LGGA…PFTH), 312–332 (LMQF…WTAT), and 339–358 (FTTI…MSNP).

It belongs to the cytochrome b family. The cytochrome bc1 complex contains 3 respiratory subunits (MT-CYB, CYC1 and UQCRFS1), 2 core proteins (UQCRC1 and UQCRC2) and probably 6 low-molecular weight proteins. Requires heme b as cofactor.

It localises to the mitochondrion inner membrane. Component of the ubiquinol-cytochrome c reductase complex (complex III or cytochrome b-c1 complex) that is part of the mitochondrial respiratory chain. The b-c1 complex mediates electron transfer from ubiquinol to cytochrome c. Contributes to the generation of a proton gradient across the mitochondrial membrane that is then used for ATP synthesis. This chain is Cytochrome b (MT-CYB), found in Candoia carinata (Papuan tree boa).